Here is a 266-residue protein sequence, read N- to C-terminus: Glucosamine-6-phosphate deaminase (266 aa).

The Proton acceptor; for enolization step role is filled by Asp72. The active-site For ring-opening step is the Asp141. His143 functions as the Proton acceptor; for ring-opening step in the catalytic mechanism. Glu148 serves as the catalytic For ring-opening step.

This sequence belongs to the glucosamine/galactosamine-6-phosphate isomerase family. NagB subfamily. Homohexamer.

It catalyses the reaction alpha-D-glucosamine 6-phosphate + H2O = beta-D-fructose 6-phosphate + NH4(+). The protein operates within amino-sugar metabolism; N-acetylneuraminate degradation; D-fructose 6-phosphate from N-acetylneuraminate: step 5/5. Allosterically activated by N-acetylglucosamine 6-phosphate (GlcNAc6P). Functionally, catalyzes the reversible isomerization-deamination of glucosamine 6-phosphate (GlcN6P) to form fructose 6-phosphate (Fru6P) and ammonium ion. The chain is Glucosamine-6-phosphate deaminase from Klebsiella pneumoniae (strain 342).